Reading from the N-terminus, the 258-residue chain is Tryptophan synthase alpha chain (258 aa).

Catalysis depends on proton acceptor residues glutamate 46 and aspartate 57.

It belongs to the TrpA family. As to quaternary structure, tetramer of two alpha and two beta chains.

It catalyses the reaction (1S,2R)-1-C-(indol-3-yl)glycerol 3-phosphate + L-serine = D-glyceraldehyde 3-phosphate + L-tryptophan + H2O. The protein operates within amino-acid biosynthesis; L-tryptophan biosynthesis; L-tryptophan from chorismate: step 5/5. Functionally, the alpha subunit is responsible for the aldol cleavage of indoleglycerol phosphate to indole and glyceraldehyde 3-phosphate. The chain is Tryptophan synthase alpha chain from Phocaeicola vulgatus (strain ATCC 8482 / DSM 1447 / JCM 5826 / CCUG 4940 / NBRC 14291 / NCTC 11154) (Bacteroides vulgatus).